A 475-amino-acid chain; its full sequence is Zinc finger protein 383 (475 aa).

The region spanning 6–77 (VMFSDVSIDF…GRELTRGLCS (72 aa)) is the KRAB domain. C2H2-type zinc fingers lie at residues 170 to 192 (FECK…QRIH), 198 to 220 (YECK…LKIH), 226 to 248 (FECK…QRIH), 254 to 276 (YECK…QRIH), 282 to 304 (YACK…VRIH), 310 to 332 (YECK…QRIH), 338 to 360 (YECK…QRIH), 366 to 388 (YDCK…QRIH), 394 to 416 (FECL…QRIH), 422 to 444 (YECN…LRIH), and 450 to 472 (YNCK…QGIH).

This sequence belongs to the krueppel C2H2-type zinc-finger protein family.

The protein resides in the nucleus. Its subcellular location is the cytoplasm. Its function is as follows. May function as a transcriptional repressor, suppressing transcriptional activities mediated by MAPK signaling pathways. This Macaca fascicularis (Crab-eating macaque) protein is Zinc finger protein 383 (ZNF383).